The following is a 270-amino-acid chain: Large ribosomal subunit protein uL10 (270 aa).

Positions 234 to 270 (VTELEAGKTRPKREGNRRQAMNGDEMDEDQSSDEDSD) are disordered. Over residues 238-250 (EAGKTRPKREGNR) the composition is skewed to basic and acidic residues. Residues 257-270 (DEMDEDQSSDEDSD) are compositionally biased toward acidic residues.

This sequence belongs to the universal ribosomal protein uL10 family. Associates with the pre-60S ribosomal particle.

Its subcellular location is the nucleus. The protein resides in the nucleolus. It is found in the cytoplasm. Component of the ribosome assembly machinery. Nuclear paralog of the ribosomal protein P0, it binds pre-60S subunits at an early stage of assembly in the nucleolus, and is replaced by P0 in cytoplasmic pre-60S subunits and mature 80S ribosomes. In Chaetomium thermophilum (strain DSM 1495 / CBS 144.50 / IMI 039719) (Thermochaetoides thermophila), this protein is Large ribosomal subunit protein uL10.